Consider the following 486-residue polypeptide: Cephamycin export protein CmcT (486 aa).

14 helical membrane passes run Val24 to Leu44, Ala56 to Gly76, Val88 to Ser108, Ala121 to Gly141, Ala153 to Leu173, Val178 to Ala198, Leu210 to Ser230, Ala241 to Ala261, Leu284 to Met304, Leu317 to Leu337, Val345 to Thr365, Ala369 to Gly389, Phe418 to Ser438, and Phe450 to Leu470.

Belongs to the major facilitator superfamily.

It localises to the cell membrane. Functionally, involved in cephamycin export. This chain is Cephamycin export protein CmcT (cmcT), found in Amycolatopsis lactamdurans (Nocardia lactamdurans).